The following is a 261-amino-acid chain: Ubiquinone biosynthesis O-methyltransferase (261 aa).

The segment at 1-22 (MTMQVDPSANSSAASSAAPGTT) is disordered. Low complexity predominate over residues 8–18 (SANSSAASSAA). Arginine 55, glycine 86, aspartate 107, and methionine 149 together coordinate S-adenosyl-L-methionine.

It belongs to the methyltransferase superfamily. UbiG/COQ3 family.

It catalyses the reaction a 3-demethylubiquinol + S-adenosyl-L-methionine = a ubiquinol + S-adenosyl-L-homocysteine + H(+). The enzyme catalyses a 3-(all-trans-polyprenyl)benzene-1,2-diol + S-adenosyl-L-methionine = a 2-methoxy-6-(all-trans-polyprenyl)phenol + S-adenosyl-L-homocysteine + H(+). It functions in the pathway cofactor biosynthesis; ubiquinone biosynthesis. Functionally, O-methyltransferase that catalyzes the 2 O-methylation steps in the ubiquinone biosynthetic pathway. The sequence is that of Ubiquinone biosynthesis O-methyltransferase from Nitrobacter winogradskyi (strain ATCC 25391 / DSM 10237 / CIP 104748 / NCIMB 11846 / Nb-255).